The chain runs to 96 residues: Co-chaperonin GroES (96 aa).

The protein belongs to the GroES chaperonin family. In terms of assembly, heptamer of 7 subunits arranged in a ring. Interacts with the chaperonin GroEL.

The protein resides in the cytoplasm. Functionally, together with the chaperonin GroEL, plays an essential role in assisting protein folding. The GroEL-GroES system forms a nano-cage that allows encapsulation of the non-native substrate proteins and provides a physical environment optimized to promote and accelerate protein folding. GroES binds to the apical surface of the GroEL ring, thereby capping the opening of the GroEL channel. The chain is Co-chaperonin GroES from Teredinibacter turnerae (strain ATCC 39867 / T7901).